The sequence spans 150 residues: Arginine repressor (150 aa).

This sequence belongs to the ArgR family.

It localises to the cytoplasm. The protein operates within amino-acid biosynthesis; L-arginine biosynthesis [regulation]. In terms of biological role, regulates arginine biosynthesis genes. This Thermoanaerobacter sp. (strain X514) protein is Arginine repressor.